The following is a 156-amino-acid chain: Acyl carrier protein, mitochondrial (156 aa).

A mitochondrion-targeting transit peptide spans 1-68 (MASRVLSAYV…GRVTQLCRQY (68 aa)). Residues 77-152 (EGIQDRVLYV…EIVDYIADKK (76 aa)) form the Carrier domain. Lys-88 carries the post-translational modification N6-acetyllysine. Ser-112 is modified (O-(pantetheine 4'-phosphoryl)serine).

This sequence belongs to the acyl carrier protein (ACP) family. As to quaternary structure, mammalian complex I is composed of 45 different subunits. Interacts with ETFRF1. Identified in a complex composed of MALSU1, MIEF1 upstream open reading frame protein and NDUFAB1; within the trimeric complex, MIEF1 upstream open reading frame protein functions as a bridging scaffold that interacts with MALSU1 on one side, and with NDUFAB1 on the other side. The complex interacts with the mitochondrial large ribosomal subunit. Interacts with alpha-1-microglobulin chain; this interaction is required for the maintenance of mitochondrial redox homeostasis. Component of the mitochondrial core iron-sulfur cluster (ISC) complex composed of NFS1, LYRM4, NDUFAB1, ISCU, FXN, and FDX2; this complex is a heterohexamer containing two copies of each monomer. Component of the cyteine desulfurase complex composed of NFS1, LYRM4 and NDUFAB1; this complex contributes to the stability and cysteine desulfurase activity of NFS1. Phosphopantetheinylation at Ser-112 is essential for interactions with LYR motif-containing proteins.

It localises to the mitochondrion. Carrier of the growing fatty acid chain in fatty acid biosynthesis. Accessory and non-catalytic subunit of the mitochondrial membrane respiratory chain NADH dehydrogenase (Complex I), which functions in the transfer of electrons from NADH to the respiratory chain. Accessory protein, of the core iron-sulfur cluster (ISC) assembly complex, that regulates, in association with LYRM4, the stability and the cysteine desulfurase activity of NFS1 and participates in the [2Fe-2S] clusters assembly on the scaffolding protein ISCU. The core iron-sulfur cluster (ISC) assembly complex is involved in the de novo synthesis of a [2Fe-2S] cluster, the first step of the mitochondrial iron-sulfur protein biogenesis. This process is initiated by the cysteine desulfurase complex (NFS1:LYRM4:NDUFAB1) that produces persulfide which is delivered on the scaffold protein ISCU in a FXN-dependent manner. Then this complex is stabilized by FDX2 which provides reducing equivalents to accomplish the [2Fe-2S] cluster assembly. Finally, the [2Fe-2S] cluster is transferred from ISCU to chaperone proteins, including HSCB, HSPA9 and GLRX5. The sequence is that of Acyl carrier protein, mitochondrial from Gorilla gorilla gorilla (Western lowland gorilla).